We begin with the raw amino-acid sequence, 255 residues long: Na(+)-translocating NADH-quinone reductase subunit C (255 aa).

Residues L12–G32 traverse the membrane as a helical segment. The residue at position 223 (T223) is an FMN phosphoryl threonine.

This sequence belongs to the NqrC family. In terms of assembly, composed of six subunits; NqrA, NqrB, NqrC, NqrD, NqrE and NqrF. FMN serves as cofactor.

It is found in the cell inner membrane. The enzyme catalyses a ubiquinone + n Na(+)(in) + NADH + H(+) = a ubiquinol + n Na(+)(out) + NAD(+). Functionally, NQR complex catalyzes the reduction of ubiquinone-1 to ubiquinol by two successive reactions, coupled with the transport of Na(+) ions from the cytoplasm to the periplasm. NqrA to NqrE are probably involved in the second step, the conversion of ubisemiquinone to ubiquinol. The sequence is that of Na(+)-translocating NADH-quinone reductase subunit C from Vibrio anguillarum (Listonella anguillarum).